A 988-amino-acid chain; its full sequence is Vacuolar sorting protein 18 (988 aa).

The stretch at 589 to 749 (NKNLNPRRLI…VVKQEKGAKR (161 aa)) is one CHCR repeat. Residues 785–819 (KEAICSSLEDYNKQIEQLKEEMNDATRGADNIRND) are a coiled coil. An RING-type; degenerate zinc finger spans residues 836–886 (CGVCKRKILMMSGDFRMAQGYSSAGPLAPFYVFPCGHSFHAQCLITHVTSC).

Belongs to the VPS18 family. As to quaternary structure, core component of at least two putative endosomal tethering complexes, the homotypic fusion and vacuole protein sorting (HOPS) complex and the class C core vacuole/endosome tethering (CORVET) complex. Their common core is composed of the class C Vps proteins VPS11, VCL1, VPS18 and VPS33, which in HOPS further associates with VPS39 and VPS41 and in CORVET with VPS3.

Its subcellular location is the endosome membrane. It is found in the vacuole membrane. The protein resides in the cytoplasm. In terms of biological role, essential protein required during embryogenesis. Believed to act as a core component of the putative HOPS endosomal tethering complex and of the class C core vacuole/endosome tethering (CORVET) complex. CORVET is required for vacuolar transport of SYP22. HOPS is required for the central vacuole formation. Involved in root development. Plays a role in vesicle-mediated protein trafficking to lysosomal compartments including the endocytic membrane transport pathways. This chain is Vacuolar sorting protein 18, found in Arabidopsis thaliana (Mouse-ear cress).